The sequence spans 219 residues: Ras-related protein RABA5d (219 aa).

An N-acetylserine modification is found at Ser-2. A GTP-binding site is contributed by 19–26 (GDSAVGKS). The Effector region motif lies at 41 to 49 (SKATIGVEF). Residues 67 to 71 (DTAGQ), 125 to 128 (NKCD), and 155 to 156 (SA) contribute to the GTP site. 2 S-geranylgeranyl cysteine lipidation sites follow: Cys-215 and Cys-216.

It belongs to the small GTPase superfamily. Rab family.

The protein localises to the cell membrane. Intracellular vesicle trafficking and protein transport. This Arabidopsis thaliana (Mouse-ear cress) protein is Ras-related protein RABA5d (RABA5D).